Consider the following 1448-residue polypeptide: Gag-Pol polyprotein (1448 aa).

A lipid anchor (N-myristoyl glycine; by host) is attached at G2. Positions 16–22 match the Nuclear export signal motif; that stretch reads LEKIRLR. Positions 26-32 match the Nuclear localization signal motif; sequence KKKYMLK. Residues 218 to 227 show a composition bias toward low complexity; it reads HPQQAPQQGQ. The interval 218 to 237 is disordered; sequence HPQQAPQQGQLREPSGSDIA. CCHC-type zinc fingers lie at residues 391-408 and 412-429; these read IKCW…QCRA and QGCW…KCPN. Positions 440 to 461 are disordered; the sequence is LGKEAPQFPHGSSASGADANCS. The region spanning 517–586 is the Peptidase A2 domain; that stretch reads VEVLLDTGAD…TPINIFGRNL (70 aa). The For protease activity; shared with dimeric partner role is filled by D522. The region spanning 640–830 is the Reverse transcriptase domain; that stretch reads DGQLEEAPPT…PPFQWMGYEL (191 aa). Mg(2+) contacts are provided by D706, D781, and D782. The RT 'primer grip' stretch occupies residues 823 to 831; the sequence is FQWMGYELW. The short motif at 993 to 1009 is the Tryptophan repeat motif element; it reads WEQWWTDYWQVTWIPEW. Residues 1029–1152 enclose the RNase H type-1 domain; it reads IEGEETYYVD…IDHLVSQGIR (124 aa). D1038, E1073, D1093, and D1144 together coordinate Mg(2+). Residues 1158 to 1199 form an Integrase-type zinc finger; sequence EKIEPAQEEHSKYHSNIKELVFKFGLPRLVAKQIVDTCDKCH. Zn(2+)-binding residues include H1167, H1171, C1195, and C1198. An Integrase catalytic domain is found at 1209-1359; the sequence is VNSDLGTWQM…TPAERLINMI (151 aa). Residues D1219 and D1271 each coordinate Mg(2+). Residues 1378 to 1425 constitute a DNA-binding region (integrase-type); sequence FRVYYREGRDQLWKGPGELLWKGEGAVILKVGTDIKVVPRRKAKIIKD. Positions 1426–1448 are disordered; that stretch reads YGGGKEMDSSSHMEDTGEAREVA.

As to quaternary structure, homotrimer. Interacts with gp41 (via C-terminus). Homodimer. The active site consists of two apposed aspartic acid residues. In terms of assembly, heterodimer of p66 RT and p51 RT (RT p66/p51). Heterodimerization of RT is essential for DNA polymerase activity. Despite the sequence identities, p66 RT and p51 RT have distinct folding. As to quaternary structure, homotetramer; may further associate as a homohexadecamer. Mg(2+) is required as a cofactor. Specific enzymatic cleavages by the viral protease yield mature proteins. The protease is released by autocatalytic cleavage. The polyprotein is cleaved during and after budding, this process is termed maturation. Proteolytic cleavage of p66 RT removes the RNase H domain to yield the p51 RT subunit. Post-translationally, capsid protein p24 is phosphorylated.

The protein resides in the virion. The protein localises to the host nucleus. It is found in the host cytoplasm. It localises to the host cell membrane. It carries out the reaction Specific for a P1 residue that is hydrophobic, and P1' variable, but often Pro.. It catalyses the reaction Endohydrolysis of RNA in RNA/DNA hybrids. Three different cleavage modes: 1. sequence-specific internal cleavage of RNA. Human immunodeficiency virus type 1 and Moloney murine leukemia virus enzymes prefer to cleave the RNA strand one nucleotide away from the RNA-DNA junction. 2. RNA 5'-end directed cleavage 13-19 nucleotides from the RNA end. 3. DNA 3'-end directed cleavage 15-20 nucleotides away from the primer terminus.. The enzyme catalyses 3'-end directed exonucleolytic cleavage of viral RNA-DNA hybrid.. The catalysed reaction is DNA(n) + a 2'-deoxyribonucleoside 5'-triphosphate = DNA(n+1) + diphosphate. With respect to regulation, the viral protease is inhibited by many synthetic protease inhibitors (PIs), such as amprenavir, atazanavir, indinavir, loprinavir, nelfinavir, ritonavir and saquinavir. RT can be inhibited either by nucleoside RT inhibitors (NRTIs) or by non nucleoside RT inhibitors (NNRTIs). NRTIs act as chain terminators, whereas NNRTIs inhibit DNA polymerization by binding a small hydrophobic pocket near the RT active site and inducing an allosteric change in this region. Classical NRTIs are abacavir, adefovir (PMEA), didanosine (ddI), lamivudine (3TC), stavudine (d4T), tenofovir (PMPA), zalcitabine (ddC), and zidovudine (AZT). Classical NNRTIs are atevirdine (BHAP U-87201E), delavirdine, efavirenz (DMP-266), emivirine (I-EBU), and nevirapine (BI-RG-587). The tritherapies used as a basic effective treatment of AIDS associate two NRTIs and one NNRTI. Use of protease inhibitors in tritherapy regimens permit more ambitious therapeutic strategies. Gag-Pol polyprotein and Gag polyprotein may regulate their own translation, by the binding genomic RNA in the 5'-UTR. At low concentration, Gag-Pol and Gag would promote translation, whereas at high concentration, the polyproteins encapsidate genomic RNA and then shut off translation. Its function is as follows. Matrix protein p17 has two main functions: in infected cell, it targets Gag and Gag-pol polyproteins to the plasma membrane via a multipartite membrane-binding signal, that includes its myristointegration complex. The myristoylation signal and the NLS exert conflicting influences its subcellular localization. The key regulation of these motifs might be phosphorylation of a portion of MA molecules on the C-terminal tyrosine at the time of virus maturation, by virion-associated cellular tyrosine kinase. Implicated in the release from host cell mediated by Vpu. In terms of biological role, capsid protein p24 forms the conical core that encapsulates the genomic RNA-nucleocapsid complex in the virion. The core is constituted by capsid protein hexamer subunits. The core is disassembled soon after virion entry. Interaction with host PPIA/CYPA protects the virus from restriction by host TRIM5-alpha and from an unknown antiviral activity in host cells. This capsid restriction by TRIM5 is one of the factors which restricts SIV to the simian species. Functionally, nucleocapsid protein p7 encapsulates and protects viral dimeric unspliced (genomic) RNA. Binds these RNAs through its zinc fingers. Facilitates rearangement of nucleic acid secondary structure during retrotranscription of genomic RNA. This capability is referred to as nucleic acid chaperone activity. The aspartyl protease mediates proteolytic cleavages of Gag and Gag-Pol polyproteins during or shortly after the release of the virion from the plasma membrane. Cleavages take place as an ordered, step-wise cascade to yield mature proteins. This process is called maturation. Displays maximal activity during the budding process just prior to particle release from the cell. Also cleaves Nef and Vif, probably concomitantly with viral structural proteins on maturation of virus particles. Hydrolyzes host EIF4GI and PABP1 in order to shut off the capped cellular mRNA translation. The resulting inhibition of cellular protein synthesis serves to ensure maximal viral gene expression and to evade host immune response. Its function is as follows. Reverse transcriptase/ribonuclease H (RT) is a multifunctional enzyme that converts the viral dimeric RNA genome into dsDNA in the cytoplasm, shortly after virus entry into the cell. This enzyme displays a DNA polymerase activity that can copy either DNA or RNA templates, and a ribonuclease H (RNase H) activity that cleaves the RNA strand of RNA-DNA heteroduplexes in a partially processive 3' to 5' endonucleasic mode. Conversion of viral genomic RNA into dsDNA requires many steps. A tRNA binds to the primer-binding site (PBS) situated at the 5'-end of the viral RNA. RT uses the 3' end of the tRNA primer to perform a short round of RNA-dependent minus-strand DNA synthesis. The reading proceeds through the U5 region and ends after the repeated (R) region which is present at both ends of viral RNA. The portion of the RNA-DNA heteroduplex is digested by the RNase H, resulting in a ssDNA product attached to the tRNA primer. This ssDNA/tRNA hybridizes with the identical R region situated at the 3' end of viral RNA. This template exchange, known as minus-strand DNA strong stop transfer, can be either intra- or intermolecular. RT uses the 3' end of this newly synthesized short ssDNA to perform the RNA-dependent minus-strand DNA synthesis of the whole template. RNase H digests the RNA template except for two polypurine tracts (PPTs) situated at the 5'-end and near the center of the genome. It is not clear if both polymerase and RNase H activities are simultaneous. RNase H can probably proceed both in a polymerase-dependent (RNA cut into small fragments by the same RT performing DNA synthesis) and a polymerase-independent mode (cleavage of remaining RNA fragments by free RTs). Secondly, RT performs DNA-directed plus-strand DNA synthesis using the PPTs that have not been removed by RNase H as primers. PPTs and tRNA primers are then removed by RNase H. The 3' and 5' ssDNA PBS regions hybridize to form a circular dsDNA intermediate. Strand displacement synthesis by RT to the PBS and PPT ends produces a blunt ended, linear dsDNA copy of the viral genome that includes long terminal repeats (LTRs) at both ends. In terms of biological role, integrase catalyzes viral DNA integration into the host chromosome, by performing a series of DNA cutting and joining reactions. This enzyme activity takes place after virion entry into a cell and reverse transcription of the RNA genome in dsDNA. The first step in the integration process is 3' processing. This step requires a complex comprising the viral genome, matrix protein, Vpr and integrase. This complex is called the pre-integration complex (PIC). The integrase protein removes 2 nucleotides from each 3' end of the viral DNA, leaving recessed CA OH's at the 3' ends. In the second step, the PIC enters cell nucleus. This process is mediated through integrase and Vpr proteins, and allows the virus to infect a non dividing cell. This ability to enter the nucleus is specific of lentiviruses, other retroviruses cannot and rely on cell division to access cell chromosomes. In the third step, termed strand transfer, the integrase protein joins the previously processed 3' ends to the 5' ends of strands of target cellular DNA at the site of integration. The 5'-ends are produced by integrase-catalyzed staggered cuts, 5 bp apart. A Y-shaped, gapped, recombination intermediate results, with the 5'-ends of the viral DNA strands and the 3' ends of target DNA strands remaining unjoined, flanking a gap of 5 bp. The last step is viral DNA integration into host chromosome. This involves host DNA repair synthesis in which the 5 bp gaps between the unjoined strands are filled in and then ligated. Since this process occurs at both cuts flanking the SIV genome, a 5 bp duplication of host DNA is produced at the ends of SIV integration. Alternatively, Integrase may catalyze the excision of viral DNA just after strand transfer, this is termed disintegration. This is Gag-Pol polyprotein (gag-pol) from Cercopithecidae (Old World monkeys).